We begin with the raw amino-acid sequence, 49 residues long: Isoflavone reductase homolog 2 (49 aa).

5–11 (GGTGYIG) lines the NADP(+) pocket.

Belongs to the NmrA-type oxidoreductase family. Isoflavone reductase subfamily.

Its subcellular location is the cytoplasm. This Pseudotsuga menziesii (Douglas-fir) protein is Isoflavone reductase homolog 2.